Consider the following 252-residue polypeptide: Eukaryotic translation initiation factor 3 subunit K (252 aa).

In terms of domain architecture, PCI spans 46 to 225 (FDCYANLALL…VKVPTNKENE (180 aa)).

The protein belongs to the eIF-3 subunit K family. Component of the eukaryotic translation initiation factor 3 (eIF-3) complex.

The protein resides in the cytoplasm. Component of the eukaryotic translation initiation factor 3 (eIF-3) complex, which is involved in protein synthesis of a specialized repertoire of mRNAs and, together with other initiation factors, stimulates binding of mRNA and methionyl-tRNAi to the 40S ribosome. The eIF-3 complex specifically targets and initiates translation of a subset of mRNAs involved in cell proliferation. This Aspergillus terreus (strain NIH 2624 / FGSC A1156) protein is Eukaryotic translation initiation factor 3 subunit K.